The primary structure comprises 209 residues: 8-oxoguanine DNA glycosylase/AP lyase (209 aa).

Residues Lys-131 and Asp-149 contribute to the active site.

This sequence belongs to the type-2 OGG1 family.

It catalyses the reaction 2'-deoxyribonucleotide-(2'-deoxyribose 5'-phosphate)-2'-deoxyribonucleotide-DNA = a 3'-end 2'-deoxyribonucleotide-(2,3-dehydro-2,3-deoxyribose 5'-phosphate)-DNA + a 5'-end 5'-phospho-2'-deoxyribonucleoside-DNA + H(+). In terms of biological role, catalyzes the excision of an oxidatively damaged form of guanine (7,8-dihydro-8-oxoguanine = 8-oxoG) from DNA. Also cleaves the DNA backbone at apurinic/apyrimidinic sites (AP sites). This Korarchaeum cryptofilum (strain OPF8) protein is 8-oxoguanine DNA glycosylase/AP lyase.